We begin with the raw amino-acid sequence, 491 residues long: Trigger factor (491 aa).

Residues Gly169–Ile254 enclose the PPIase FKBP-type domain. Residues Lys434–Glu491 are disordered. Basic residues predominate over residues Lys452–Ala461.

It belongs to the FKBP-type PPIase family. Tig subfamily.

It is found in the cytoplasm. It carries out the reaction [protein]-peptidylproline (omega=180) = [protein]-peptidylproline (omega=0). Functionally, involved in protein export. Acts as a chaperone by maintaining the newly synthesized protein in an open conformation. Functions as a peptidyl-prolyl cis-trans isomerase. The chain is Trigger factor from Sinorhizobium medicae (strain WSM419) (Ensifer medicae).